Reading from the N-terminus, the 73-residue chain is Small, acid-soluble spore protein C5 (73 aa).

The protein belongs to the alpha/beta-type SASP family.

Its function is as follows. SASP are bound to spore DNA. They are double-stranded DNA-binding proteins that cause DNA to change to an a-like conformation. They protect the DNA backbone from chemical and enzymatic cleavage and are thus involved in dormant spore's high resistance to UV light. This chain is Small, acid-soluble spore protein C5 (SASP-C5), found in Priestia megaterium (Bacillus megaterium).